The primary structure comprises 85 residues: MGLIDFLRNKTKTAETAKNRLQIIIAQERTQRGGPDYLPLLQRELLEVIKKYVKIDANAVKVDLIKDGANDVLDISVALPDDSER.

The protein belongs to the MinE family.

Its function is as follows. Prevents the cell division inhibition by proteins MinC and MinD at internal division sites while permitting inhibition at polar sites. This ensures cell division at the proper site by restricting the formation of a division septum at the midpoint of the long axis of the cell. This Xylella fastidiosa (strain M12) protein is Cell division topological specificity factor.